The following is a 424-amino-acid chain: MFS-type transporter opdF (424 aa).

A compositionally biased stretch (basic and acidic residues) spans 1–10; the sequence is MSDTSLEKGN. The disordered stretch occupies residues 1–23; it reads MSDTSLEKGNEGPTAEAPKVAPP. A run of 5 helical transmembrane segments spans residues 36-56, 102-122, 127-147, 160-180, and 187-207; these read VAGASVALFVSFGWVNCIALF, VPIAIGSFLHVFGLMMASLST, LMLSQSVVSGIGSSLIFTPAM, IVGGLTVAGSSLGGVVFPLMV, and VGFGWTMRICAFMILGLLVFA. A glycan (N-linked (GlcNAc...) asparagine) is linked at Asn208. Transmembrane regions (helical) follow at residues 239–259, 265–285, 299–319, 329–349, 364–384, and 391–411; these read LCVASFFMYWGIFIPFDYIVV, GMSTQMAWSLVPILNGASFFG, FNVMIVMTTLSAILVLALWLP, FAALFGITSGAIIGLGPVLIV, VLAFAAVGTLTSPPIGGAIAA, and TYTCVFSGVSFLIGTLGLAAL.

It belongs to the major facilitator superfamily. Monocarboxylate porter (TC 2.A.1.13) family.

The protein resides in the membrane. In terms of biological role, MFS-type transporter; part of the gene cluster that mediates the biosynthesis of oxopyrrolidines, polyketide-amino acid hybrid compounds with feature structures of tetramic acid. The chain is MFS-type transporter opdF from Penicillium oxalicum (strain 114-2 / CGMCC 5302) (Penicillium decumbens).